The chain runs to 714 residues: MNSFMAIALIWMMIACAEADKPLRDPGMTGFQTCKDTLKLPVLEVLPGGGWDNLRNIDMGRVIDLTYTNCKTTEDGQYIIPDEVYTIPQKESNLEMNSEIRDSWVNYQSTTSFSINTELSLFSKVNGKFSTEFQRMKTLQVKDQAVTTRVQVRNRIYTVKNSPTSELSFGFTNALMDICDQLEKNQTKMATYLAELLVLNYGTHVITSVDAGAALVQEDHIRSSFLLDNQNSENTVTASAGIAFLNIVNFKVETDHTSQTLLTKSYLSNRTNSRVQSFGGIPFYPGITLETWQKGITNHLVAIDRAGLPLHFFIKPDKLPGLPGGLVKKLSKTVETAVRHYYTFNTHPGCTNVDSPNFNFQANMEDDSCDAKVTNFTFGGLYQECTELSGDALCQNLEQKNLLTGDFSCPSGYTPVHLLSQTHEEGYSRLECKKKCTLKIFCKTVCEDVFRVAKAQFRAYWCVATGQVPDNSGLLFGGLFTDKSINPMTNAQSCPAGYIPLNLFESLKVCVSLDYELGYKFSVPFGGFFSCIMGNPLVNSDTAKDIGAPSLKKCPGGFSQHLAVISDGCQVSYCVKAGIFTGGSLLPVRLPPYTKPPLMSQVATNTVIVTSSETARSWIKDPQTNQWKLGEPLELHKAMTVIHGDGNGMSGGEAAGVTLGVIIALGIVITLAIYSTRKYKKEKEYQEIEEQESLVGSFATDASPPNGEQDPCPA.

The N-terminal stretch at 1-19 (MNSFMAIALIWMMIACAEA) is a signal peptide. The region spanning 30–345 (GFQTCKDTLK…TAVRHYYTFN (316 aa)) is the MACPF domain. The cysteines at positions 34 and 70 are disulfide-linked. A run of 2 beta stranded transmembrane segments spans residues 113 to 120 (FSINTELS) and 127 to 132 (GKFSTE). The N-linked (GlcNAc...) asparagine glycan is linked to N185. A run of 2 beta stranded transmembrane segments spans residues 235–244 (TVTASAGIAF) and 248–256 (VNFKVETDH). N-linked (GlcNAc...) asparagine glycosylation occurs at N269. Residues C350 and C369 are joined by a disulfide bond. The N-linked (GlcNAc...) asparagine glycan is linked to N375. 5 disulfides stabilise this stretch: C385–C394, C432–C446, C436–C442, C531–C569, and C554–C574. The interval 410–653 (PSGYTPVHLL…GDGNGMSGGE (244 aa)) is P2. A helical membrane pass occupies residues 654 to 674 (AAGVTLGVIIALGIVITLAIY). The disordered stretch occupies residues 690–714 (EQESLVGSFATDASPPNGEQDPCPA).

This sequence belongs to the MPEG1 family. As to quaternary structure, homooligomer; predominantly forms a homooligomeric arc-shaped pore complex instead of complete rings of 16 subunits. In terms of processing, proteolytically processed in two steps to generate the Macrophage-expressed gene 1 protein, processed form: cleaved by trypsin in proximity of the helical transmembrane domain releases the ectodomain into the lysosomal lumen to orient the pore-forming domain toward the endogenous membranes, and processed by the asparagine endopeptidase (LGMN). Proteolytic processing in antigen-containing vesicles is pH-dependent. Monoubiquitinated in response to bacterial infection; ubiquitination is required for vesicular localization and antibacterial activity and can be blocked by bacterial cell cycle inhibiting factor (cif).

The protein resides in the cytoplasmic vesicle membrane. It localises to the cytoplasmic vesicle. It is found in the phagosome membrane. Forms arc- and ring-shaped pre-pores on top of the membrane at neutral to slightly acidic pH conditions and converts to pores upon acidification. Undergoes transition from the pre-pore to the pore in a processive clockwise hand-over-hand process. In the pore state, 2 alpha-helical regions refold into transmembrane hairpins (TMH1 and TMH2) in each protomer that form in the ensemble complex giant beta-barrel transmembrane pores. Pore-forming protein involved in both innate and adaptive immunity. Plays a central role in antigen cross-presentation in dendritic cells by forming a pore in antigen-containing compartments, thereby promoting delivery of antigens for cross-presentation. Also involved in innate immune response following bacterial infection; shows antibacterial activity against a wide spectrum of Gram-positive, Gram-negative and acid-fast bacteria. Reduces the viability of the intracytosolic pathogen L.monocytogenes by inhibiting acidification of the phagocytic vacuole of host cells which restricts bacterial translocation from the vacuole to the cytosol. Required for the antibacterial activity of reactive oxygen species and nitric oxide. Its function is as follows. Pore-forming protein that plays a central role in antigen cross-presentation in dendritic cells by mediating delivery of antigens for cross-presentation. Dendritic cells bridge innate and adaptive immunity by capturing exogenous antigens on MHC class-I molecules and presenting them to naive CD8(+) T-cells. Acts by forming a pore in antigen-containing compartments, promoting the release of antigens into the cytosol, enabling generation of MHCI:peptide complexes and T-cell priming. This chain is Macrophage-expressed gene 1 protein (Mpeg1), found in Rattus norvegicus (Rat).